We begin with the raw amino-acid sequence, 211 residues long: Protein-L-isoaspartate O-methyltransferase (211 aa).

The active site involves S60.

The protein belongs to the methyltransferase superfamily. L-isoaspartyl/D-aspartyl protein methyltransferase family.

The protein localises to the cytoplasm. It carries out the reaction [protein]-L-isoaspartate + S-adenosyl-L-methionine = [protein]-L-isoaspartate alpha-methyl ester + S-adenosyl-L-homocysteine. Catalyzes the methyl esterification of L-isoaspartyl residues in peptides and proteins that result from spontaneous decomposition of normal L-aspartyl and L-asparaginyl residues. It plays a role in the repair and/or degradation of damaged proteins. The polypeptide is Protein-L-isoaspartate O-methyltransferase (Pseudomonas fluorescens (strain Pf0-1)).